A 450-amino-acid chain; its full sequence is IMP-specific 5'-nucleotidase 1 (450 aa).

Residue H144 participates in ATP binding. D172 functions as the Nucleophile in the catalytic mechanism. 6 residues coordinate IMP: D172, D174, D180, T208, D376, and K384. Residues D172 and D174 each contribute to the Mg(2+) site. The active-site Proton donor is the D174. Residue D411 coordinates Mg(2+).

The protein belongs to the ISN1 family. In terms of assembly, homotetramer. Mg(2+) serves as cofactor.

It catalyses the reaction IMP + H2O = inosine + phosphate. With respect to regulation, allosterically activated by ATP. ATP binding is a prerequisite to magnesium and substrate binding. ATP binds to 2 of the subunits in the homotetramer inducing a closure of these 2 subunits and the release of the C-terminal loop, thereby activating the enzyme. IMP-specific 5'-nucleotidase involved in IMP (inosine 5'-phosphate) degradation. This is IMP-specific 5'-nucleotidase 1 (ISN1) from Saccharomyces cerevisiae (strain ATCC 204508 / S288c) (Baker's yeast).